We begin with the raw amino-acid sequence, 418 residues long: Tyrosine--tRNA ligase (418 aa).

Position 34 (Y34) interacts with L-tyrosine. Residues 39–48 (PTGDSMHIGH) carry the 'HIGH' region motif. The L-tyrosine site is built by Y166 and Q170. Positions 228 to 232 (KFGKT) match the 'KMSKS' region motif. Residue K231 coordinates ATP. The S4 RNA-binding domain maps to 350–418 (QNIVLWLVDA…KKRYFLAHVK (69 aa)).

The protein belongs to the class-I aminoacyl-tRNA synthetase family. TyrS type 1 subfamily. In terms of assembly, homodimer.

It localises to the cytoplasm. It carries out the reaction tRNA(Tyr) + L-tyrosine + ATP = L-tyrosyl-tRNA(Tyr) + AMP + diphosphate + H(+). Functionally, catalyzes the attachment of tyrosine to tRNA(Tyr) in a two-step reaction: tyrosine is first activated by ATP to form Tyr-AMP and then transferred to the acceptor end of tRNA(Tyr). In Lactiplantibacillus plantarum (strain ATCC BAA-793 / NCIMB 8826 / WCFS1) (Lactobacillus plantarum), this protein is Tyrosine--tRNA ligase.